Consider the following 423-residue polypeptide: Dihydroorotase (423 aa).

Zn(2+) is bound by residues His60 and His62. Substrate-binding positions include 62–64 and Asn94; that span reads HFR. Zn(2+) is bound by residues Asp151, His178, and His231. Residue Asn277 coordinates substrate. Asp304 serves as a coordination point for Zn(2+). The active site involves Asp304. Position 308 (His308) interacts with substrate.

The protein belongs to the metallo-dependent hydrolases superfamily. DHOase family. Class I DHOase subfamily. Zn(2+) is required as a cofactor.

The enzyme catalyses (S)-dihydroorotate + H2O = N-carbamoyl-L-aspartate + H(+). It participates in pyrimidine metabolism; UMP biosynthesis via de novo pathway; (S)-dihydroorotate from bicarbonate: step 3/3. Catalyzes the reversible cyclization of carbamoyl aspartate to dihydroorotate. This Lactococcus lactis subsp. lactis (strain IL1403) (Streptococcus lactis) protein is Dihydroorotase.